We begin with the raw amino-acid sequence, 346 residues long: Putative F-box/kelch-repeat protein At1g27420 (346 aa).

One can recognise an F-box domain in the interval 9 to 56; that stretch reads PIIPGLTDDVAELCVSKIPRSSFQITSQVCRRWRSFLRSQHFAAVRKL. Kelch repeat units follow at residues 62-109, 111-167, 168-215, 217-257, and 259-300; these read EFLC…VLDG, KIVF…EVNG, LLYV…AFSS, LYAV…VRNK, and YFMD…VWNN.

The sequence is that of Putative F-box/kelch-repeat protein At1g27420 from Arabidopsis thaliana (Mouse-ear cress).